A 704-amino-acid chain; its full sequence is Metabotropic glutamate receptor-like protein K (704 aa).

Residues 1–21 (MIKLILSIILIICFIINSIES) form the signal peptide. Topologically, residues 22–383 (FKMITLTTGP…SKVEFQRSIQ (362 aa)) are extracellular. N-linked (GlcNAc...) asparagine glycans are attached at residues N66, N104, N256, N286, N308, N337, N343, and N368. The helical transmembrane segment at 384 to 404 (IGFSIVSGLLIGFVILMMIGI) threads the bilayer. Residues 405-419 (VKYQDTPSIRSASPS) lie on the Cytoplasmic side of the membrane. A helical transmembrane segment spans residues 420–440 (FLNLTLLGGVIIFIGIIVWVA). Residues 441-455 (PISTHQCNARFWLVT) lie on the Extracellular side of the membrane. A helical transmembrane segment spans residues 456-476 (IGFSTLIGSLVVKNIRIWLIF). Topologically, residues 477–492 (DNPELKIRTITNNQLY) are cytoplasmic. A helical membrane pass occupies residues 493 to 513 (PWVGLCLVINIVLMSIITTVG). Over 514–541 (DLKAIEAQGIDSLGKFEYMTICKMNYTG) the chain is Extracellular. Residue N538 is glycosylated (N-linked (GlcNAc...) asparagine). Residues 542–562 (AATLYSILAYFGTLLLVGVFV) traverse the membrane as a helical segment. Residues 563–578 (SWKIRIVHIEEFSECT) lie on the Cytoplasmic side of the membrane. A helical transmembrane segment spans residues 579 to 599 (AIAKTLYSISFCLFVIVPLMI). The Extracellular segment spans residues 600–608 (SPQDKQSET). Residues 609–629 (IILCVTGIFITTGALLIFFLP) traverse the membrane as a helical segment. The Cytoplasmic portion of the chain corresponds to 630-704 (KFWRIFGNEK…NESSLSNETK (75 aa)). 2 disordered regions span residues 657-677 (ARAESANRNNSSNSFGFSKSS) and 685-704 (SGIESLNDDSNESSLSNETK).

This sequence in the N-terminal section; belongs to the BMP lipoprotein family. It in the C-terminal section; belongs to the G-protein coupled receptor 3 family. GABA-B receptor subfamily.

The protein resides in the membrane. The protein is Metabotropic glutamate receptor-like protein K (grlK) of Dictyostelium discoideum (Social amoeba).